A 282-amino-acid polypeptide reads, in one-letter code: uncharacterized protein (282 aa).

Transmembrane regions (helical) follow at residues 130–150, 170–190, 191–211, and 223–243; these read WALLCVGIAQIALGTVQGFGL, STSWSIALGVIMVGAALWPSA, AAGLAGVLTAFVAILTGYVIV, and ILTHLPVVIGAVLAIMVWRSA. The interval 263–282 is disordered; the sequence is DNASRGRRRGHLWPTDGSAA.

It is found in the cell membrane. This is an uncharacterized protein from Mycobacterium tuberculosis (strain CDC 1551 / Oshkosh).